Reading from the N-terminus, the 339-residue chain is Ketol-acid reductoisomerase (NADP(+)) (339 aa).

A KARI N-terminal Rossmann domain is found at 1 to 182 (MRVYYDRDAD…GGGRSGVIET (182 aa)). NADP(+) contacts are provided by residues 24–27 (YGSQ), R48, S51, T53, and 83–86 (DEHQ). Residue H108 is part of the active site. Residue G134 participates in NADP(+) binding. Residues 183–328 (TFKEECETDL…AELRAMMPWI (146 aa)) form the KARI C-terminal knotted domain. Residues D191, E195, E227, and E231 each coordinate Mg(2+). S252 serves as a coordination point for substrate.

The protein belongs to the ketol-acid reductoisomerase family. Mg(2+) serves as cofactor.

It catalyses the reaction (2R)-2,3-dihydroxy-3-methylbutanoate + NADP(+) = (2S)-2-acetolactate + NADPH + H(+). It carries out the reaction (2R,3R)-2,3-dihydroxy-3-methylpentanoate + NADP(+) = (S)-2-ethyl-2-hydroxy-3-oxobutanoate + NADPH + H(+). It participates in amino-acid biosynthesis; L-isoleucine biosynthesis; L-isoleucine from 2-oxobutanoate: step 2/4. The protein operates within amino-acid biosynthesis; L-valine biosynthesis; L-valine from pyruvate: step 2/4. Functionally, involved in the biosynthesis of branched-chain amino acids (BCAA). Catalyzes an alkyl-migration followed by a ketol-acid reduction of (S)-2-acetolactate (S2AL) to yield (R)-2,3-dihydroxy-isovalerate. In the isomerase reaction, S2AL is rearranged via a Mg-dependent methyl migration to produce 3-hydroxy-3-methyl-2-ketobutyrate (HMKB). In the reductase reaction, this 2-ketoacid undergoes a metal-dependent reduction by NADPH to yield (R)-2,3-dihydroxy-isovalerate. This Rhizorhabdus wittichii (strain DSM 6014 / CCUG 31198 / JCM 15750 / NBRC 105917 / EY 4224 / RW1) (Sphingomonas wittichii) protein is Ketol-acid reductoisomerase (NADP(+)).